A 170-amino-acid polypeptide reads, in one-letter code: Co-chaperone protein HscB homolog (170 aa).

One can recognise a J domain in the interval 5 to 79 (DHFSLFGLPT…RARYLCEQAG (75 aa)).

This sequence belongs to the HscB family. Interacts with HscA and stimulates its ATPase activity.

Co-chaperone involved in the maturation of iron-sulfur cluster-containing proteins. Seems to help targeting proteins to be folded toward HscA. This chain is Co-chaperone protein HscB homolog, found in Bordetella bronchiseptica (strain ATCC BAA-588 / NCTC 13252 / RB50) (Alcaligenes bronchisepticus).